A 90-amino-acid chain; its full sequence is U7-theraphotoxin-Hhn1a 6 (90 aa).

A signal peptide spans 1-19 (MKTAIFTVVLALAVFAVLS). Residues 20 to 50 (FGWEANEKALSEEFTELIHEKEAASEAEARE) constitute a propeptide that is removed on maturation. Disulfide bonds link cysteine 51–cysteine 65, cysteine 58–cysteine 70, and cysteine 64–cysteine 81.

This sequence belongs to the neurotoxin 10 (Hwtx-1) family. 13 (Hntx-13) subfamily. Expressed by the venom gland.

The protein resides in the secreted. Functionally, ion channel inhibitor. The polypeptide is U7-theraphotoxin-Hhn1a 6 (Cyriopagopus hainanus (Chinese bird spider)).